Reading from the N-terminus, the 365-residue chain is Elongation factor Tu (365 aa).

GTP contacts are provided by residues 1–7 (HVDHGKT), 62–66 (DCPGH), and 117–120 (NKCD). The region spanning 1 to 185 (HVDHGKTTLT…TLDSYIPTPE (185 aa)) is the tr-type G domain. A Mg(2+)-binding site is contributed by Thr7.

This sequence belongs to the TRAFAC class translation factor GTPase superfamily. Classic translation factor GTPase family. EF-Tu/EF-1A subfamily. Monomer.

The protein resides in the cytoplasm. It carries out the reaction GTP + H2O = GDP + phosphate + H(+). GTP hydrolase that promotes the GTP-dependent binding of aminoacyl-tRNA to the A-site of ribosomes during protein biosynthesis. In Buchnera aphidicola subsp. Schlechtendalia chinensis, this protein is Elongation factor Tu.